A 218-amino-acid chain; its full sequence is DNA ADP-ribosyl transferase (218 aa).

The 204-residue stretch at A14–F217 folds into the DarT domain. Residues R18 to V20 and R57 contribute to the NAD(+) site. The tract at residues Q41–G59 is NAD(+)-binding element. The active-site Proton acceptor is the R57. The tract at residues T123 to E170 is ADP-ribosylating turn-turn loop. Residue E170 is part of the active site.

It belongs to the DarT ADP-ribosyltransferase family. Interacts with cognate antitoxin DarG (via C-terminus); this heterodimeric complex neutralizes the toxic effect of DarT by preventing ssDNA binding to DarT and consequently inactivating the toxin by direct protein-protein interactions.

It catalyses the reaction a thymidine in DNA + NAD(+) = an N-(ADP-alpha-D-ribosyl)-thymidine in DNA + nicotinamide + H(+). Toxic component of the hybrid type II/IV toxin-antitoxin (TA) system DarTG, which plays a crucial role in controlling bacterial growth and bacteriophage infection. ADP-ribosylates ssDNA in the sequence TTT/TCT. In case of phage infection, DarT toxin ADP-ribosylates DNA, which inhibits both viral DNA and RNA synthesis and leads to abortive infection. Its toxic effect is neutralized by cognate antitoxin DarG. May target ssDNA loops during DNA replication, probably modifies thymidine. Wild-type protein cannot be expressed at low levels in the absence of its cognate antitoxin, but a mutant protein (G49D) can be expressed, which slows growth, rapidly inhibits DNA replication, and induces RecA expression and the SOS response. The slow growth phenotype can be suppressed by cognate antitoxin DarG. Has no activity on dsDNA in vitro. In vivo ADP-ribosylates genomic DNA (gDNA). Genetic data strongly suggests ADP-ribosylation by DarT probably generates ssDNA gaps that are repaired by the RecFOR-mediated homologous recombination pathway (RuvAB, RecG) and resolved by RuvC. In some cases these gaps probably migrate into dsDNA, where they are resolved by nucleotide excision repair (NER) detected by UvrAB, excised by UvrC, removed by UvrD, and repaired by Pol I and ligase. Other pathways may also be involved in ADP-ribosylation removal from DNA. The polypeptide is DNA ADP-ribosyl transferase (Escherichia coli O127:H6 (strain E2348/69 / EPEC)).